A 218-amino-acid polypeptide reads, in one-letter code: Non-structural protein NS3 (218 aa).

This sequence belongs to the orbivirus NS3 family.

Its function is as follows. May play a role in the release of virions from infected cells. This is Non-structural protein NS3 (Segment-10) from Camelus dromedarius (Dromedary).